The sequence spans 130 residues: Small ribosomal subunit protein uS8 (130 aa).

Belongs to the universal ribosomal protein uS8 family.

The protein resides in the cytoplasm. The protein is Small ribosomal subunit protein uS8 (RPS15A) of Brassica napus (Rape).